Consider the following 353-residue polypeptide: UDP-N-acetylglucosamine--N-acetylmuramyl-(pentapeptide) pyrophosphoryl-undecaprenol N-acetylglucosamine transferase (353 aa).

UDP-N-acetyl-alpha-D-glucosamine is bound by residues 10–12 (TGG), Asn-124, Ser-183, and Gln-283.

Belongs to the glycosyltransferase 28 family. MurG subfamily.

It localises to the cell inner membrane. It carries out the reaction di-trans,octa-cis-undecaprenyl diphospho-N-acetyl-alpha-D-muramoyl-L-alanyl-D-glutamyl-meso-2,6-diaminopimeloyl-D-alanyl-D-alanine + UDP-N-acetyl-alpha-D-glucosamine = di-trans,octa-cis-undecaprenyl diphospho-[N-acetyl-alpha-D-glucosaminyl-(1-&gt;4)]-N-acetyl-alpha-D-muramoyl-L-alanyl-D-glutamyl-meso-2,6-diaminopimeloyl-D-alanyl-D-alanine + UDP + H(+). Its pathway is cell wall biogenesis; peptidoglycan biosynthesis. Cell wall formation. Catalyzes the transfer of a GlcNAc subunit on undecaprenyl-pyrophosphoryl-MurNAc-pentapeptide (lipid intermediate I) to form undecaprenyl-pyrophosphoryl-MurNAc-(pentapeptide)GlcNAc (lipid intermediate II). In Helicobacter acinonychis (strain Sheeba), this protein is UDP-N-acetylglucosamine--N-acetylmuramyl-(pentapeptide) pyrophosphoryl-undecaprenol N-acetylglucosamine transferase.